A 701-amino-acid polypeptide reads, in one-letter code: MARTTPIERYRNIGISAHIDAGKTTTTERVLFYTGVSHKIGEVHDGAATMDWMEQEQERGITITSAATTAFWSGMGKQFQPHRINIIDTPGHVDFTIEVERSMRVLDGAVMVYCAVGGVQPQSETVWRQANKYKVPRIAFVNKMDRTGANYLRCVEHIKTRLKGTPVPLQLNIGSEENFKGVIDLVKMKAINWSEADQGVSFDYEEIPAELLEQAQEMRMSLVEAAAEASEDLMEKYLGGEELTEEEIKKALRLRVLNNEIILVTCGSAFKNKGVQAMLDAVVDYLPAPTDVAAIDGLKLDGVTKDERHASDDEPFAALAFKIATDPFVGNLTFFRVYSGVVNSGDSVLNSVKEKRERFGRIVQMHANKREEIKEVRAGDIAAAIGLKDVTTGDTLCDEKSPIILERMEFPEPVISIAVEPKTKADQEKMGLALGRLAQEDPSFRVWTDEESGQTIIAGMGELHLDIIVDRMRREFKVEANVGKPQVAYRETIRETVKDVEGKHAKQSGGRGQYGHVVIDMYPLEAGKAYEFVNDIKGGVIPGEYIPGVDKGIREQLKSGPLAGYPVMDLGVRLHFGSYHDVDSSELAFKIAASMAFKSGYMKANPVLLEPIMKVEVETPEDYMGDVIGDLNRRRGLIEGMEDGPSGKIVRALVPLAEMFGYATALRSATQGRASYAMEFAKYSDAPNNVAQAVIEERKSK.

The region spanning 8-290 (ERYRNIGISA…AVVDYLPAPT (283 aa)) is the tr-type G domain. Residues 17 to 24 (AHIDAGKT), 88 to 92 (DTPGH), and 142 to 145 (NKMD) contribute to the GTP site.

It belongs to the TRAFAC class translation factor GTPase superfamily. Classic translation factor GTPase family. EF-G/EF-2 subfamily.

The protein localises to the cytoplasm. Catalyzes the GTP-dependent ribosomal translocation step during translation elongation. During this step, the ribosome changes from the pre-translocational (PRE) to the post-translocational (POST) state as the newly formed A-site-bound peptidyl-tRNA and P-site-bound deacylated tRNA move to the P and E sites, respectively. Catalyzes the coordinated movement of the two tRNA molecules, the mRNA and conformational changes in the ribosome. This chain is Elongation factor G, found in Aeromonas salmonicida (strain A449).